The primary structure comprises 114 residues: Non-specific lipid-transfer protein 1 (114 aa).

The signal sequence occupies residues 1 to 23; sequence MEIAGKIACFVVLCMVVAAPCAE. Disulfide bonds link Cys-27-Cys-73, Cys-37-Cys-50, Cys-51-Cys-96, and Cys-71-Cys-110.

It belongs to the plant LTP family. High expression in leaf epidermis and shoot apex, and also in root epidermis during seedling germination.

Plant non-specific lipid-transfer proteins transfer phospholipids as well as galactolipids across membranes. Binds cis-unsaturated fatty acids and jasmonic acid with a higher affinity than linear chain fatty acids. Formation of the complex with jasmonic acid results in a conformational change facilitating the LPT1 binding on the elicitin plasma membrane receptor that is known to be involved in plant defense induction. May also play a role in wax or cutin deposition in the cell walls of expanding epidermal cells and certain secretory tissues. This Nicotiana tabacum (Common tobacco) protein is Non-specific lipid-transfer protein 1 (LTP1).